A 109-amino-acid chain; its full sequence is Ig kappa chain V region 3374 (109 aa).

The framework-1 stretch occupies residues 1 to 24 (ADIVMTQTPASVSAAVGGTVTINC). Positions 25–35 (QASQNIDSWLA) are complementarity-determining-1. Positions 36–50 (WYQQKPGQPPKVLIY) are framework-2. The interval 51-57 (RTSTLAS) is complementarity-determining-2. A framework-3 region spans residues 58-89 (GVPSRFKGSRSGTEFTLTISDLECADAATYYC). The tract at residues 90–98 (QSYYSISSA) is complementarity-determining-3. Residues 99–108 (FGGGTEVVVK) are framework-4.

The protein is Ig kappa chain V region 3374 of Oryctolagus cuniculus (Rabbit).